We begin with the raw amino-acid sequence, 763 residues long: Nibrin (763 aa).

The region spanning tyrosine 22–methionine 81 is the FHA domain. BRCT domains lie at serine 102 to leucine 179 and lysine 215 to arginine 324. 3 disordered regions span residues valine 389 to threonine 496, serine 535 to glutamate 593, and glutamine 738 to arginine 763. The span at leucine 423–lysine 433 shows a compositional bias: basic and acidic residues. Residues asparagine 434 to serine 443 show a composition bias toward polar residues. The Nuclear localization signal signature appears at alanine 469–arginine 474. The segment covering aspartate 473–serine 482 has biased composition (basic and acidic residues). Residues valine 742–phenylalanine 752 are compositionally biased toward basic and acidic residues. The FxF/Y motif signature appears at alanine 748–lysine 757.

The protein belongs to the Nibrin family. As to quaternary structure, component of the MRN complex composed of two heterodimers rad50 and mre11 associated with a single nbn.

The protein localises to the nucleus. It is found in the chromosome. The protein resides in the PML body. Its subcellular location is the telomere. In terms of biological role, component of the MRN complex, which plays a central role in double-strand break (DSB) repair, DNA recombination, maintenance of telomere integrity and meiosis. The MRN complex is involved in the repair of DNA double-strand breaks (DSBs) via homologous recombination (HR), an error-free mechanism which primarily occurs during S and G2 phases. The complex (1) mediates the end resection of damaged DNA, which generates proper single-stranded DNA, a key initial steps in HR, and is (2) required for the recruitment of other repair factors and efficient activation of ATM and ATR upon DNA damage. The MRN complex possesses single-strand endonuclease activity and double-strand-specific 3'-5' exonuclease activity, which are provided by MRE11, to initiate end resection, which is required for single-strand invasion and recombination. Within the MRN complex, nbn acts as a protein-protein adapter, which specifically recognizes and binds phosphorylated proteins, promoting their recruitment to DNA damage sites. Recruits mre11 and rad50 components of the MRN complex to DSBs in response to DNA damage. Promotes the recruitment of PI3/PI4-kinase family members atm, atr, and probably DNA-PKcs to the DNA damage sites, activating their functions. Mediates the recruitment of phosphorylated rbbp8/CtIP to DSBs, leading to cooperation between the MRN complex and rbbp8/CtIP to initiate end resection. The MRN complex promotes recruitment of topbp1 to DNA damage sites. The MRN complex and rbbp8/CtIP are also required for chromosome alignment during metaphase. The polypeptide is Nibrin (Xenopus laevis (African clawed frog)).